Here is a 137-residue protein sequence, read N- to C-terminus: Endoribonuclease YbeY (137 aa).

Residues histidine 105, histidine 109, and aspartate 115 each contribute to the Zn(2+) site.

The protein belongs to the endoribonuclease YbeY family. Zn(2+) serves as cofactor.

It is found in the cytoplasm. In terms of biological role, single strand-specific metallo-endoribonuclease involved in late-stage 70S ribosome quality control and in maturation of the 3' terminus of the 16S rRNA. This Chlorobaculum tepidum (strain ATCC 49652 / DSM 12025 / NBRC 103806 / TLS) (Chlorobium tepidum) protein is Endoribonuclease YbeY.